We begin with the raw amino-acid sequence, 158 residues long: RNA pyrophosphohydrolase (158 aa).

The Nudix hydrolase domain occupies 9-151 (PLRNGVGIVV…KLHVYKDVKE (143 aa)). A Nudix box motif is present at residues 43–64 (GGVDKGEDYLTAAYRELEEETS).

Belongs to the Nudix hydrolase family. RppH subfamily. The cofactor is a divalent metal cation.

Its function is as follows. Accelerates the degradation of transcripts by removing pyrophosphate from the 5'-end of triphosphorylated RNA, leading to a more labile monophosphorylated state that can stimulate subsequent ribonuclease cleavage. This is RNA pyrophosphohydrolase from Pelagibacter ubique (strain HTCC1062).